Reading from the N-terminus, the 143-residue chain is Large ribosomal subunit protein uL13 (143 aa).

The protein belongs to the universal ribosomal protein uL13 family. In terms of assembly, part of the 50S ribosomal subunit.

This protein is one of the early assembly proteins of the 50S ribosomal subunit, although it is not seen to bind rRNA by itself. It is important during the early stages of 50S assembly. In Neisseria gonorrhoeae (strain ATCC 700825 / FA 1090), this protein is Large ribosomal subunit protein uL13.